A 446-amino-acid polypeptide reads, in one-letter code: Keratin, type I cytoskeletal 25 (446 aa).

Residues 1–20 (MSLRLSSGSKRSYARPSTGS) form a disordered region. The tract at residues 1–74 (MSLRLSSGSK…VNEGGLLSGN (74 aa)) is head. The interval 75-110 (EKVTMQNLNDRLASYLDNVQALQEANADLEQKIKGW) is coil 1A. An IF rod domain is found at 75 to 390 (EKVTMQNLND…LLIGGDEGAC (316 aa)). Residues 111–132 (YEKFGPGSCRGLDHDYSRYFPI) are linker 1. The tract at residues 133 to 224 (IDDLKNQIIT…KNHKEEMQAL (92 aa)) is coil 1B. The tract at residues 225-247 (QCAAGGNVNVEMNAAPGVDLTVL) is linker 12. Positions 248–386 (LNNMRAEYEA…ETYCLLIGGD (139 aa)) are coil 2. Residues 387-446 (EGACKSSSYKSKDYTSGNAGNQSKDSPKAIVVKKVLEEVDQRSKILTTRLHSLEEKSQSN) form a tail region. The disordered stretch occupies residues 394-413 (SYKSKDYTSGNAGNQSKDSP). Residues 400–410 (YTSGNAGNQSK) are compositionally biased toward polar residues. The residue at position 438 (Ser-438) is a Phosphoserine.

Belongs to the intermediate filament family. In terms of assembly, heterodimer of a type I and a type II keratin. Heterodimer with type II keratin KRT5 leading to the formation of keratin intermediate filament (KIF) network. Interacts with KRT6A to form filaments.

It localises to the cytoplasm. In terms of biological role, essential for the proper assembly of type I and type II keratin protein complexes and formation of keratin intermediate filaments in the inner root sheath (irs). Plays a role in the cytoskeleton organization. This chain is Keratin, type I cytoskeletal 25, found in Rattus norvegicus (Rat).